Here is a 142-residue protein sequence, read N- to C-terminus: Large ribosomal subunit protein uL13 (142 aa).

It belongs to the universal ribosomal protein uL13 family. Part of the 50S ribosomal subunit.

Functionally, this protein is one of the early assembly proteins of the 50S ribosomal subunit, although it is not seen to bind rRNA by itself. It is important during the early stages of 50S assembly. The polypeptide is Large ribosomal subunit protein uL13 (Yersinia enterocolitica serotype O:8 / biotype 1B (strain NCTC 13174 / 8081)).